Reading from the N-terminus, the 218-residue chain is Peptide methionine sulfoxide reductase A2 (218 aa).

Residues 1-19 show a composition bias toward polar residues; sequence MDSSLKTQEPQVVETSPSP. The tract at residues 1–30 is disordered; that stretch reads MDSSLKTQEPQVVETSPSPVAQEPPQVADK. Position 205 is a phosphoserine (serine 205).

This sequence belongs to the MsrA Met sulfoxide reductase family.

The protein localises to the cytoplasm. The protein resides in the cytosol. It catalyses the reaction L-methionyl-[protein] + [thioredoxin]-disulfide + H2O = L-methionyl-(S)-S-oxide-[protein] + [thioredoxin]-dithiol. It carries out the reaction [thioredoxin]-disulfide + L-methionine + H2O = L-methionine (S)-S-oxide + [thioredoxin]-dithiol. Its activity is regulated as follows. Activated during dark in short day conditions. Its function is as follows. Catalyzes the reduction of methionine sulfoxide (MetSO) to methionine in proteins. Plays a protective role against oxidative stress by restoring activity to proteins that have been inactivated by methionine oxidation. Prevents cellular oxidative damage in long nights. MSRA family specifically reduces the MetSO S-enantiomer. The sequence is that of Peptide methionine sulfoxide reductase A2 (MRSA2) from Arabidopsis thaliana (Mouse-ear cress).